A 469-amino-acid polypeptide reads, in one-letter code: Transcription factor phomD (469 aa).

The zn(2)-C6 fungal-type DNA-binding region spans Cys-14–Cys-41. Residues Thr-49–Ala-118 form a disordered region. Residues Lys-82–Met-93 show a composition bias toward polar residues. The segment covering Gln-104–Ala-118 has biased composition (low complexity).

The protein localises to the nucleus. Functionally, transcription factor; part of the gene cluster that mediates the biosynthesis of the phomopsins, a group of hexapeptide mycotoxins which infects lupins and causes lupinosis disease in livestock. May play a role in the regulation of the production of phomopsins. The protein is Transcription factor phomD of Diaporthe leptostromiformis (Lupinosis disease fungus).